A 297-amino-acid chain; its full sequence is tRNA-cytidine(32) 2-sulfurtransferase (297 aa).

A PP-loop motif motif is present at residues 45 to 50 (SGGKDS). [4Fe-4S] cluster contacts are provided by C120, C123, and C211.

It belongs to the TtcA family. As to quaternary structure, homodimer. It depends on Mg(2+) as a cofactor. The cofactor is [4Fe-4S] cluster.

It is found in the cytoplasm. It catalyses the reaction cytidine(32) in tRNA + S-sulfanyl-L-cysteinyl-[cysteine desulfurase] + AH2 + ATP = 2-thiocytidine(32) in tRNA + L-cysteinyl-[cysteine desulfurase] + A + AMP + diphosphate + H(+). Its pathway is tRNA modification. Catalyzes the ATP-dependent 2-thiolation of cytidine in position 32 of tRNA, to form 2-thiocytidine (s(2)C32). The sulfur atoms are provided by the cysteine/cysteine desulfurase (IscS) system. The sequence is that of tRNA-cytidine(32) 2-sulfurtransferase from Vibrio campbellii (strain ATCC BAA-1116).